Here is a 376-residue protein sequence, read N- to C-terminus: Cytochrome b (376 aa).

4 helical membrane-spanning segments follow: residues Tyr28–Ser48, Trp72–Leu94, Ser107–Val127, and Phe169–Phe189. The heme b site is built by His78 and His92. 2 residues coordinate heme b: His173 and His187. An a ubiquinone-binding site is contributed by His192. The next 4 helical transmembrane spans lie at Leu214–Ile234, Ile274–Leu294, Val317–Pro337, and Ile340–Leu360.

Belongs to the cytochrome b family. As to quaternary structure, the main subunits of complex b-c1 are: cytochrome b, cytochrome c1 and the Rieske protein. The cofactor is heme b.

The protein localises to the mitochondrion inner membrane. Component of the ubiquinol-cytochrome c reductase complex (complex III or cytochrome b-c1 complex) that is part of the mitochondrial respiratory chain. The b-c1 complex mediates electron transfer from ubiquinol to cytochrome c. Contributes to the generation of a proton gradient across the mitochondrial membrane that is then used for ATP synthesis. In Plasmodium berghei, this protein is Cytochrome b (MT-CYB).